Consider the following 424-residue polypeptide: Choline-phosphate cytidylyltransferase (424 aa).

The interval 1-70 is disordered; sequence MANPTTGKSS…RKRRRLTKEF (70 aa). Low complexity predominate over residues 14–24; the sequence is KLSNSSLSNLF. Phosphoserine is present on S16. The span at 35-44 shows a compositional bias: acidic residues; it reads ETEEQDNEDK. Over residues 45–55 the composition is skewed to basic and acidic residues; sequence DESKNQDENKD. T59 is subject to Phosphothreonine. CTP-binding positions include 111 to 119 and K149; that span reads VFDLFHLGH. Residues K149 and W178 each coordinate substrate. CTP-binding positions include 195–196, Y200, and 223–227; these read HD and RTNGV. Phosphoserine is present on S346. Positions 348–424 are disordered; sequence ATEFANEFTG…LTQKKKQSAN (77 aa). Positions 381-398 are enriched in low complexity; sequence NSNNTNTNSDSDSNTNST. S401 carries the phosphoserine; by CK2 modification.

The protein belongs to the cytidylyltransferase family.

The protein resides in the membrane. The enzyme catalyses phosphocholine + CTP + H(+) = CDP-choline + diphosphate. It functions in the pathway phospholipid metabolism; phosphatidylcholine biosynthesis; phosphatidylcholine from phosphocholine: step 1/2. Its function is as follows. Catalyzes the key rate-limiting step in the CDP-choline pathway for phosphatidylcholine biosynthesis. This chain is Choline-phosphate cytidylyltransferase (PCT1), found in Saccharomyces cerevisiae (strain ATCC 204508 / S288c) (Baker's yeast).